Reading from the N-terminus, the 75-residue chain is Dermaseptin-related peptide (75 aa).

The N-terminal stretch at 1–22 (MAFLNKSLLLVLFLGLVSLSIC) is a signal peptide. Positions 23 to 43 (EEERRENEDEEEQEDDEQSEM) are excised as a propeptide. The disordered stretch occupies residues 24–44 (EERRENEDEEEQEDDEQSEMR). The segment covering 30 to 40 (EDEEEQEDDEQ) has biased composition (acidic residues). Residue Gln-72 is modified to Glutamine amide. Residues 74–75 (EQ) constitute a propeptide that is removed on maturation.

In terms of tissue distribution, expressed by the skin glands.

It localises to the secreted. Functionally, has antibacterial activity against Gram-positive bacterium M.luteus NCT C2665 but not against Gram-negative bacterium E.coli K12D31. This is Dermaseptin-related peptide from Agalychnis callidryas (Red-eyed tree frog).